Reading from the N-terminus, the 732-residue chain is MTVEPPVAIAPDAADLDLLSRGEHHNPHSILGAHPHPDGTVIRALRPHAEAVDAVIGGTSFSLEHLAHGVWGALVPYRDLMDYRLSTTWPGGHNDVSADGYRFLPTLGELDLHLFGEGRHERLWEILGAHRRRYDTPDGTVTGTSFAVWAPNARGVSVIGDFDGWSGRNYPMRVLGSTGVWELFVPGIEAGDLYKFRVHGPDGSVRDKADPMAFATEVPPATASRVSVSTYEWNDAEWLAQRAATEPAQSPMSVYEVHLASWRPGLNYREMAEQLAVHLTETGFTHVELLPVAEHPFGGSWGYQVTSYYAPTSRFGSPDDFRWFVDHLHAAGIGVIVDWVPAHFPKDEWALARFDGTPLYEHSDPQRGEQLDWGTYVFDFGRREVRNFLVANALYWLDEFHVDGLRVDAVASMLYLDYSRPEGGWTPNIHGGRENLEAVAFLQETNATVHKQHRGVVTIAEESTAWPGVTRATNVGGLGFNMKWNMGWMHDTLGFMAHDPVHRSYHHHEITFSLMYAWSENYLLPISHDEVVHGKGTLWTRMPGDDYAKAAGVRALLAYMWSHPGKQLLFMGQEFGQTAEWSEERGLDWYQLDDPYTGGFHRGLLRLVHDLNATYREHPALWTLDTSPGGFSWIDANDTANNVLSFLRYGTDGSILACLFNFSGSPHANYRVGLPERGEWREILNTDAEIYAGSGWGNLGAVTATSQPWHGRPASAEVALPANGAIWMSLER.

The active-site Nucleophile is the Asp-408. The active-site Proton donor is Glu-461.

Belongs to the glycosyl hydrolase 13 family. GlgB subfamily. As to quaternary structure, monomer.

It carries out the reaction Transfers a segment of a (1-&gt;4)-alpha-D-glucan chain to a primary hydroxy group in a similar glucan chain.. It functions in the pathway glycan biosynthesis; glycogen biosynthesis. In terms of biological role, catalyzes the formation of the alpha-1,6-glucosidic linkages in glycogen by scission of a 1,4-alpha-linked oligosaccharide from growing alpha-1,4-glucan chains and the subsequent attachment of the oligosaccharide to the alpha-1,6 position. This is 1,4-alpha-glucan branching enzyme GlgB from Rhodococcus jostii (strain RHA1).